The following is a 323-amino-acid chain: Aldo-keto reductase family 1 member C13 (323 aa).

NAD(+) contacts are provided by residues 20–24, Asp-50, and Tyr-55; that span reads GFGTY. Tyr-55 functions as the Proton donor in the catalytic mechanism. Residue His-117 participates in substrate binding. Residues 166-167, Gln-190, 216-224, and 270-280 each bind NAD(+); these read SN, YGALGTQRY, and QSFKENEMREN.

It belongs to the aldo/keto reductase family.

Its function is as follows. Catalyzes the dehydrogenation of 17-beta-hydroxysteroids. May also exhibit significant activity with a variety of cyclic and alicyclic alcohols. Uses both NAD and NADP, but the activity is much greater with NAD than with NADP. This chain is Aldo-keto reductase family 1 member C13 (Akr1c13), found in Mus musculus (Mouse).